The primary structure comprises 596 residues: Inactive metallocarboxypeptidase ECM14 (596 aa).

A signal peptide spans 1 to 22 (MHFSVRLSLFLTLASSLPLVSA). The propeptide occupies 23 to 184 (VPQHEDQAYT…QTIYESYPKA (162 aa)). Residues 182-211 (PKAGSASPSQQGPTTRRFSPSASTSKSKPH) are disordered. Positions 187 to 207 (ASPSQQGPTTRRFSPSASTSK) are enriched in polar residues. Positions 220–546 (DYQPLSVLLP…RAMVAMGKFL (327 aa)) constitute a Peptidase M14 domain. H285 and E288 together coordinate Zn(2+). Substrate-binding positions include 285 to 288 (HARE), R343, and 360 to 361 (DH). Cysteines 354 and 377 form a disulfide. N370 carries an N-linked (GlcNAc...) asparagine glycan. Zn(2+) is bound at residue H417. A substrate-binding site is contributed by 418–419 (SY). The interval 557–596 (DGLRASEEPQDYDNDLEDGEDDKDEQGSTVFRAQADDLQS) is disordered. Positions 564–580 (EPQDYDNDLEDGEDDKD) are enriched in acidic residues. The segment covering 583 to 596 (GSTVFRAQADDLQS) has biased composition (polar residues).

This sequence belongs to the peptidase M14 family. Zn(2+) is required as a cofactor.

The protein localises to the vacuole. The protein resides in the secreted. Its function is as follows. Inactive carboxypeptidase that may play a role in cell wall organization and biogenesis. The chain is Inactive metallocarboxypeptidase ECM14 (ECM14) from Arthroderma benhamiae (strain ATCC MYA-4681 / CBS 112371) (Trichophyton mentagrophytes).